The following is a 384-amino-acid chain: MTAMEGASGSSFGIDTILSGAGSGSPGMMNGDFRSLGEARTTDFRSQATPSPCSEIDTVGTAPSSPISVTLEPPEPHLVTDGPQHHHHLHHGQQPPPPSAPPAQSLQPSPQQQPPPQPQSAAQQLGSAAAAPRTSTSSFLIKDILGDSKPLAACAPYSTSVSSPHHTPKQECNAAHESFRPKLEQEDSKTKLDKREDSQSDIKCHGTKEEGDREITSSRESPPVRAKKPRKARTAFSDHQLNQLERSFERQKYLSVQDRMDLAAALNLTDTQVKTWYQNRRTKWKRQTAVGLELLAEAGNYSALQRMFPSPYFYHPSLLGSMDSTTAAAAAAAMYSSMYRTPPAPHPQLQRPLVPRVLIHGLGPGGQPALNPLSNPIPGTPHPR.

Disordered stretches follow at residues 1 to 134, 154 to 237, and 364 to 384; these read MTAM…APRT, CAPY…TAFS, and PGGQ…PHPR. Residues 119-134 are compositionally biased toward low complexity; sequence QSAAQQLGSAAAAPRT. Residues 177–217 are compositionally biased toward basic and acidic residues; sequence ESFRPKLEQEDSKTKLDKREDSQSDIKCHGTKEEGDREITS. The homeobox DNA-binding region spans 229 to 288; it reads PRKARTAFSDHQLNQLERSFERQKYLSVQDRMDLAAALNLTDTQVKTWYQNRRTKWKRQT.

It belongs to the BAR homeobox family. In terms of tissue distribution, expressed in the ganglion cell layer of the retina in the eye and in the ventral zone of the dorsal thalamus of the CNS.

The protein localises to the nucleus. Potential regulator of neural basic helix-loop-helix genes. It may down-regulate expression of ASCL1 and, within the thalamus, up-regulate NGN2, thereby regulating distinct patterns of neuronal differentiation. This is BarH-like 2 homeobox protein (Barhl2) from Rattus norvegicus (Rat).